The following is a 454-amino-acid chain: Probable xylan O-acetyltransferase 9 (454 aa).

At 1-15 (MKAPPPPSPVAKRAR) the chain is on the cytoplasmic side. Residues 16-36 (VSPFVFLLVLFLLLFSFLYGE) form a helical; Signal-anchor for type II membrane protein membrane-spanning segment. Over 37–454 (DLKELLGSQA…ELLYTKLFYP (418 aa)) the chain is Lumenal. 4 cysteine pairs are disulfide-bonded: C101–C152, C123–C188, C132–C435, and C352–C431. The short motif at 175–177 (GDS) is the GDS motif element. Catalysis depends on S177, which acts as the Nucleophile. N-linked (GlcNAc...) asparagine glycans are attached at residues N219, N293, and N394. Catalysis depends on D430, which acts as the Proton donor. The DXXH motif signature appears at 430–433 (DCVH). H433 (proton acceptor) is an active-site residue.

This sequence belongs to the PC-esterase family. TBL subfamily.

The protein resides in the golgi apparatus membrane. In terms of biological role, probable xylan acetyltransferase required for 2-O- and 3-O-monoacetylation of xylosyl residues in xylan. Possesses extremely low activity in vitro. This is Probable xylan O-acetyltransferase 9 from Oryza sativa subsp. japonica (Rice).